Here is a 670-residue protein sequence, read N- to C-terminus: Probable membrane-anchored ferredoxin csal_0991 (670 aa).

The next 5 membrane-spanning stretches (helical) occupy residues 2–22, 68–90, 94–113, 135–155, and 159–179; these read LDILLPILIFSALALAAIGAV, VATAGGFVAAMGLAIVVHGLGLA, LGWLLLAASATMFAGSLFVA, LMAFSLGIFVVTLPAVGVLPA, and GWLVALVLAAVVAWGLAELVF. 4Fe-4S ferredoxin-type domains follow at residues 241 to 271 and 316 to 347; these read WNQLLGFDACVQCGRCEAVCPAFAAGQPLNP and GTALVDAETLWSCTTCRACVEECPMMIEHVDA. [4Fe-4S] cluster is bound by residues cysteine 250, cysteine 253, cysteine 256, cysteine 260, cysteine 328, cysteine 331, cysteine 334, and cysteine 338. The tract at residues 648–670 is disordered; sequence NTPPATPASHDTAASQATEEVLS. A compositionally biased stretch (polar residues) spans 659–670; it reads TAASQATEEVLS.

It depends on [4Fe-4S] cluster as a cofactor.

The protein resides in the cell inner membrane. In terms of biological role, participates in the electron transfer process during N,N-dimethylglycine (DMG) degradation to sarcosine. Probably transfers the electrons from N,N-dimethylglycine/sarcosine dehydrogenase (DMGDH) to the electron transfer flavoprotein (ETF) EtfA-EtfB. This is Probable membrane-anchored ferredoxin csal_0991 from Chromohalobacter salexigens (strain ATCC BAA-138 / DSM 3043 / CIP 106854 / NCIMB 13768 / 1H11).